Reading from the N-terminus, the 123-residue chain is MPTIKQLIRNTRQPIKNVTKSPALRGCPQRKGTCTRVYTITPKKPNSALRKVARVRLTSGFEITAYIPGIGHNLQEHSVVLVRGGRVKDLPGVRYHIVRGTLDAVGVKDRQQGRSKYGVKKPK.

The protein belongs to the universal ribosomal protein uS12 family. As to quaternary structure, part of the 30S ribosomal subunit.

Its subcellular location is the plastid. It localises to the chloroplast. Its function is as follows. With S4 and S5 plays an important role in translational accuracy. Located at the interface of the 30S and 50S subunits. The polypeptide is Small ribosomal subunit protein uS12cz/uS12cy (rps12-A) (Nandina domestica (Heavenly bamboo)).